The primary structure comprises 376 residues: Chaperone protein DnaJ (376 aa).

The 66-residue stretch at Asp-5–Gly-70 folds into the J domain. Residues Gly-137 to Val-215 form a CR-type zinc finger. Residues Cys-150, Cys-153, Cys-167, Cys-170, Cys-189, Cys-192, Cys-203, and Cys-206 each coordinate Zn(2+). 4 CXXCXGXG motif repeats span residues Cys-150–Gly-157, Cys-167–Gly-174, Cys-189–Gly-196, and Cys-203–Gly-210.

This sequence belongs to the DnaJ family. In terms of assembly, homodimer. Requires Zn(2+) as cofactor.

Its subcellular location is the cytoplasm. In terms of biological role, participates actively in the response to hyperosmotic and heat shock by preventing the aggregation of stress-denatured proteins and by disaggregating proteins, also in an autonomous, DnaK-independent fashion. Unfolded proteins bind initially to DnaJ; upon interaction with the DnaJ-bound protein, DnaK hydrolyzes its bound ATP, resulting in the formation of a stable complex. GrpE releases ADP from DnaK; ATP binding to DnaK triggers the release of the substrate protein, thus completing the reaction cycle. Several rounds of ATP-dependent interactions between DnaJ, DnaK and GrpE are required for fully efficient folding. Also involved, together with DnaK and GrpE, in the DNA replication of plasmids through activation of initiation proteins. This is Chaperone protein DnaJ from Nitratidesulfovibrio vulgaris (strain ATCC 29579 / DSM 644 / CCUG 34227 / NCIMB 8303 / VKM B-1760 / Hildenborough) (Desulfovibrio vulgaris).